The sequence spans 205 residues: GTP cyclohydrolase-2 (205 aa).

49-53 (RIHSE) serves as a coordination point for GTP. Residues cysteine 54, cysteine 65, and cysteine 67 each contribute to the Zn(2+) site. Residues glutamine 70, 92-94 (EGR), and threonine 114 each bind GTP. Aspartate 126 acts as the Proton acceptor in catalysis. Arginine 128 acts as the Nucleophile in catalysis. 2 residues coordinate GTP: threonine 149 and lysine 154.

The protein belongs to the GTP cyclohydrolase II family. The cofactor is Zn(2+).

It carries out the reaction GTP + 4 H2O = 2,5-diamino-6-hydroxy-4-(5-phosphoribosylamino)-pyrimidine + formate + 2 phosphate + 3 H(+). It participates in cofactor biosynthesis; riboflavin biosynthesis; 5-amino-6-(D-ribitylamino)uracil from GTP: step 1/4. Its function is as follows. Catalyzes the conversion of GTP to 2,5-diamino-6-ribosylamino-4(3H)-pyrimidinone 5'-phosphate (DARP), formate and pyrophosphate. This Shewanella amazonensis (strain ATCC BAA-1098 / SB2B) protein is GTP cyclohydrolase-2.